The sequence spans 91 residues: Uteroglobin (91 aa).

Positions 1-21 (MKLAITLALVTLALLCSPASA) are cleaved as a signal peptide.

Belongs to the secretoglobin family. As to quaternary structure, antiparallel homodimer; disulfide-linked. Interaction with LMBR1L is controversial. In terms of tissue distribution, synthesized in the uterus and lung.

The protein localises to the secreted. Functionally, uteroglobin binds progesterone specifically and with high affinity. It may regulate progesterone concentrations reaching the blastocyst. It is also a potent inhibitor of phospholipase A2. The protein is Uteroglobin (SCGB1A1) of Oryctolagus cuniculus (Rabbit).